Here is a 292-residue protein sequence, read N- to C-terminus: Norajmaline N-methyltransferase (292 aa).

The SAM motif I stretch occupies residues 71–80 (KNMLDIGCGV). Residues 134–142 (KDGTFDLVL) are SAM motif II. Residues 135-141 (DGTFDLV) carry the Vacuolar targeting signal motif. The tract at residues 161–170 (IRVAAPGAPI) is SAM motif III.

The protein belongs to the class I-like SAM-binding methyltransferase superfamily. gTMT family. Homodimer. In terms of tissue distribution, mainly expressed in mature roots and, to a lesser extent, in leaves, stems and flowers.

The protein resides in the vacuole membrane. The enzyme catalyses norajmaline + S-adenosyl-L-methionine = ajmaline + S-adenosyl-L-homocysteine + H(+). It catalyses the reaction 4-methylnorajmaline + S-adenosyl-L-methionine = 4-methylajmaline + S-adenosyl-L-homocysteine + H(+). The protein operates within alkaloid biosynthesis; ajmaline biosynthesis. N-methyltransferase involved in the biosynthesis of ajmaline-type monoterpenoid indole alkaloids (MIAs) natural products, important plant-derived pharmaceuticals used in the therapy of heart disorders. Catalyzes the indole N-methylation of norajmaline to produce ajmaline. Also able, with a lower efficiency, to mediates the conversion of 4-methylnorajmaline to 4-methylajmaline. This Rauvolfia serpentina (Serpentine wood) protein is Norajmaline N-methyltransferase.